The sequence spans 51 residues: Large ribosomal subunit protein eL40 (51 aa).

This sequence belongs to the eukaryotic ribosomal protein eL40 family.

In Thermococcus gammatolerans (strain DSM 15229 / JCM 11827 / EJ3), this protein is Large ribosomal subunit protein eL40.